The chain runs to 494 residues: UDP-N-acetylmuramoyl-L-alanyl-D-glutamate--L-lysine ligase (494 aa).

Serine 30 serves as a coordination point for UDP-N-acetyl-alpha-D-muramoyl-L-alanyl-D-glutamate. 110 to 116 contacts ATP; it reads GTNGKTS. Residues 152–153, serine 179, and arginine 187 each bind UDP-N-acetyl-alpha-D-muramoyl-L-alanyl-D-glutamate; that span reads TT. Lysine 219 is modified (N6-carboxylysine). An L-lysine recognition motif motif is present at residues 406 to 409; it reads DNPA.

The protein belongs to the MurCDEF family. MurE subfamily. Post-translationally, carboxylation is probably crucial for Mg(2+) binding and, consequently, for the gamma-phosphate positioning of ATP.

The protein localises to the cytoplasm. It carries out the reaction UDP-N-acetyl-alpha-D-muramoyl-L-alanyl-D-glutamate + L-lysine + ATP = UDP-N-acetyl-alpha-D-muramoyl-L-alanyl-gamma-D-glutamyl-L-lysine + ADP + phosphate + H(+). Its pathway is cell wall biogenesis; peptidoglycan biosynthesis. Catalyzes the addition of L-lysine to the nucleotide precursor UDP-N-acetylmuramoyl-L-alanyl-D-glutamate (UMAG) in the biosynthesis of bacterial cell-wall peptidoglycan. This chain is UDP-N-acetylmuramoyl-L-alanyl-D-glutamate--L-lysine ligase, found in Staphylococcus epidermidis (strain ATCC 35984 / DSM 28319 / BCRC 17069 / CCUG 31568 / BM 3577 / RP62A).